The sequence spans 308 residues: Membrane protein insertase YidC 1 (308 aa).

The first 22 residues, methionine 1–glycine 22, serve as a signal peptide directing secretion. The N-palmitoyl cysteine moiety is linked to residue cysteine 23. Cysteine 23 carries the S-diacylglycerol cysteine lipid modification. 5 consecutive transmembrane segments (helical) span residues phenylalanine 60–isoleucine 80, phenylalanine 135–phenylalanine 155, tyrosine 168–tyrosine 188, methionine 211–phenylalanine 225, and valine 230–valine 252. Residues glutamate 263–arginine 308 are disordered. Residues serine 269–serine 278 show a composition bias toward polar residues. A compositionally biased stretch (basic residues) spans serine 293 to arginine 308.

This sequence belongs to the OXA1/ALB3/YidC family. Type 2 subfamily.

The protein resides in the cell membrane. Its function is as follows. Required for the insertion and/or proper folding and/or complex formation of integral membrane proteins into the membrane. Involved in integration of membrane proteins that insert both dependently and independently of the Sec translocase complex, as well as at least some lipoproteins. The sequence is that of Membrane protein insertase YidC 1 from Streptococcus pneumoniae (strain ATCC BAA-255 / R6).